The primary structure comprises 83 residues: Exodeoxyribonuclease 7 small subunit (83 aa).

The protein belongs to the XseB family. As to quaternary structure, heterooligomer composed of large and small subunits.

The protein localises to the cytoplasm. It carries out the reaction Exonucleolytic cleavage in either 5'- to 3'- or 3'- to 5'-direction to yield nucleoside 5'-phosphates.. Its function is as follows. Bidirectionally degrades single-stranded DNA into large acid-insoluble oligonucleotides, which are then degraded further into small acid-soluble oligonucleotides. The chain is Exodeoxyribonuclease 7 small subunit from Afipia carboxidovorans (strain ATCC 49405 / DSM 1227 / KCTC 32145 / OM5) (Oligotropha carboxidovorans).